The sequence spans 882 residues: Alanine--tRNA ligase (882 aa).

Zn(2+) is bound by residues His571, His575, Cys673, and His677.

The protein belongs to the class-II aminoacyl-tRNA synthetase family. It depends on Zn(2+) as a cofactor.

It is found in the cytoplasm. It catalyses the reaction tRNA(Ala) + L-alanine + ATP = L-alanyl-tRNA(Ala) + AMP + diphosphate. Its function is as follows. Catalyzes the attachment of alanine to tRNA(Ala) in a two-step reaction: alanine is first activated by ATP to form Ala-AMP and then transferred to the acceptor end of tRNA(Ala). Also edits incorrectly charged Ser-tRNA(Ala) and Gly-tRNA(Ala) via its editing domain. This chain is Alanine--tRNA ligase, found in Desulfotalea psychrophila (strain LSv54 / DSM 12343).